We begin with the raw amino-acid sequence, 78 residues long: DNA gyrase inhibitor YacG (78 aa).

Cys-7, Cys-10, Cys-26, and Cys-30 together coordinate Zn(2+).

Belongs to the DNA gyrase inhibitor YacG family. As to quaternary structure, interacts with GyrB. It depends on Zn(2+) as a cofactor.

In terms of biological role, inhibits all the catalytic activities of DNA gyrase by preventing its interaction with DNA. Acts by binding directly to the C-terminal domain of GyrB, which probably disrupts DNA binding by the gyrase. This is DNA gyrase inhibitor YacG from Shewanella piezotolerans (strain WP3 / JCM 13877).